The chain runs to 278 residues: Indole-3-glycerol phosphate synthase (278 aa).

It belongs to the TrpC family.

It carries out the reaction 1-(2-carboxyphenylamino)-1-deoxy-D-ribulose 5-phosphate + H(+) = (1S,2R)-1-C-(indol-3-yl)glycerol 3-phosphate + CO2 + H2O. It participates in amino-acid biosynthesis; L-tryptophan biosynthesis; L-tryptophan from chorismate: step 4/5. This chain is Indole-3-glycerol phosphate synthase, found in Pseudomonas aeruginosa (strain LESB58).